The primary structure comprises 820 residues: G-type lectin S-receptor-like serine/threonine-protein kinase At1g11300 (820 aa).

An N-terminal signal peptide occupies residues 1 to 26 (MRLHESSSPFVCILVLSCFFLSVSLA). The Bulb-type lectin domain occupies 27-150 (QERAFFSGKL…SSDAYLWESF (124 aa)). Over 27–436 (QERAFFSGKL…SEIKTKDKRP (410 aa)) the chain is Extracellular. Asn37, Asn58, Asn87, Asn115, Asn123, Asn173, Asn211, Asn247, Asn256, and Asn282 each carry an N-linked (GlcNAc...) asparagine glycan. In terms of domain architecture, EGF-like; atypical spans 290–326 (PATECDNYRRCGEFATCNPRKNPLCSCIRGFRPRNLI). 2 cysteine pairs are disulfide-bonded: Cys294–Cys306 and Cys300–Cys314. N-linked (GlcNAc...) asparagine glycans are attached at residues Asn332 and Asn351. One can recognise a PAN domain in the interval 345-425 (CERQNNNGSA…SGLDLYIRLA (81 aa)). Intrachain disulfides connect Cys379-Cys400 and Cys383-Cys389. Asn404 carries N-linked (GlcNAc...) asparagine glycosylation. A helical membrane pass occupies residues 437–457 (ILIGTILAGGIFVVAACVLLA). At 458-820 (RRIVMKKRAK…NVTITDVTGR (363 aa)) the chain is on the cytoplasmic side. The region spanning 509-788 (FSLRNKLGQG…DIPEPKQPAF (280 aa)) is the Protein kinase domain. ATP-binding positions include 515–523 (LGQGGFGPV) and Lys537. A caM-binding region spans residues 598 to 615 (RRAKLLDWKTRFNIINGI). Residue Asp634 is the Proton acceptor of the active site.

It belongs to the protein kinase superfamily. Ser/Thr protein kinase family.

Its subcellular location is the cell membrane. It carries out the reaction L-seryl-[protein] + ATP = O-phospho-L-seryl-[protein] + ADP + H(+). It catalyses the reaction L-threonyl-[protein] + ATP = O-phospho-L-threonyl-[protein] + ADP + H(+). This Arabidopsis thaliana (Mouse-ear cress) protein is G-type lectin S-receptor-like serine/threonine-protein kinase At1g11300.